The primary structure comprises 425 residues: Sucrose-phosphatase 2 (425 aa).

The protein belongs to the sucrose phosphatase family. In terms of assembly, homodimer. Mg(2+) is required as a cofactor.

The enzyme catalyses sucrose 6(F)-phosphate + H2O = sucrose + phosphate. The protein operates within glycan biosynthesis; sucrose biosynthesis; sucrose from D-fructose 6-phosphate and UDP-alpha-D-glucose: step 2/2. Its activity is regulated as follows. Inhibited by EDTA. In terms of biological role, catalyzes the final step of sucrose synthesis. The sequence is that of Sucrose-phosphatase 2 (SPP2) from Nicotiana tabacum (Common tobacco).